A 113-amino-acid chain; its full sequence is Putative anti-sigma factor antagonist TM1081 homolog (113 aa).

One can recognise an STAS domain in the interval 1 to 110; that stretch reads MFPYKIVEDV…DTISEALEEV (110 aa). Ser-55 carries the post-translational modification Phosphoserine.

The protein belongs to the anti-sigma-factor antagonist family. Phosphorylated on a serine residue.

In the phosphorylated form it could act as an anti-anti-sigma factor that counteracts an anti-sigma factor and thus releases a sigma factor from inhibition. This is Putative anti-sigma factor antagonist TM1081 homolog from Thermotoga neapolitana.